We begin with the raw amino-acid sequence, 331 residues long: MKIILNKIYQGDTLNISETYTLFKSIMLKKINNIELSAILIALKIRGESQNEILGAVKACLEHMITFPKPTYMFSDIVGTGGDNSNSINISTTSALVGSACGFKIAKHCNGNISSKTGSADILKKFGINIQISPEKSKKMLDELNICFLFAPQYHINFKVVTQVRKILRIKTIFNIIAPLLNPAMPKLTVMGVCNFKLMLPIAQVLKTLNYHHAIIVCSDNIDEVTLHSFTKIIELKNNNITSYILHPDDFGVKYCHKNDILGGNTEENYNIIKKILQGKGPSAVTETIAVNVAILFKIFGYSNLKKNTEYALKVIRSGKVYEKIIQLSKF.

5-phospho-alpha-D-ribose 1-diphosphate is bound by residues Gly79, 82–83 (GD), Ser87, 89–92 (NIST), 107–115 (KHCNGNISS), and Ser119. Gly79 lines the anthranilate pocket. Ser91 is a Mg(2+) binding site. Asn110 contacts anthranilate. Residue Arg165 participates in anthranilate binding. Residues Asp223 and Glu224 each coordinate Mg(2+).

This sequence belongs to the anthranilate phosphoribosyltransferase family. In terms of assembly, homodimer. Mg(2+) serves as cofactor.

It carries out the reaction N-(5-phospho-beta-D-ribosyl)anthranilate + diphosphate = 5-phospho-alpha-D-ribose 1-diphosphate + anthranilate. The protein operates within amino-acid biosynthesis; L-tryptophan biosynthesis; L-tryptophan from chorismate: step 2/5. In terms of biological role, catalyzes the transfer of the phosphoribosyl group of 5-phosphorylribose-1-pyrophosphate (PRPP) to anthranilate to yield N-(5'-phosphoribosyl)-anthranilate (PRA). This chain is Anthranilate phosphoribosyltransferase, found in Buchnera aphidicola subsp. Baizongia pistaciae (strain Bp).